The sequence spans 427 residues: Dihydroorotase (427 aa).

Zn(2+)-binding residues include His57 and His59. Residues 59–61 (HLR) and Asn91 each bind substrate. Residues Asp149, His176, and His229 each contribute to the Zn(2+) site. A substrate-binding site is contributed by Asn275. Asp302 provides a ligand contact to Zn(2+). Asp302 is a catalytic residue. Substrate is bound by residues His306 and 320–321 (FG).

Belongs to the metallo-dependent hydrolases superfamily. DHOase family. Class I DHOase subfamily. It depends on Zn(2+) as a cofactor.

The catalysed reaction is (S)-dihydroorotate + H2O = N-carbamoyl-L-aspartate + H(+). The protein operates within pyrimidine metabolism; UMP biosynthesis via de novo pathway; (S)-dihydroorotate from bicarbonate: step 3/3. Its function is as follows. Catalyzes the reversible cyclization of carbamoyl aspartate to dihydroorotate. The polypeptide is Dihydroorotase (Shouchella clausii (strain KSM-K16) (Alkalihalobacillus clausii)).